Here is a 508-residue protein sequence, read N- to C-terminus: Photosystem II CP47 reaction center protein (508 aa).

The next 6 membrane-spanning stretches (helical) occupy residues 21–36, 101–115, 140–156, 203–218, 237–252, and 457–472; these read SVHIMHTALVAGWAGS, IVFSGLCFLAAIWHW, GIHLFLSGVACFGFGAF, IAAGTLGILAGLFHLS, VLSSSIAAVFFAAFVV, and SFALLFFFGHIWHGSR.

It belongs to the PsbB/PsbC family. PsbB subfamily. In terms of assembly, PSII is composed of 1 copy each of membrane proteins PsbA, PsbB, PsbC, PsbD, PsbE, PsbF, PsbH, PsbI, PsbJ, PsbK, PsbL, PsbM, PsbT, PsbX, PsbY, PsbZ, Psb30/Ycf12, at least 3 peripheral proteins of the oxygen-evolving complex and a large number of cofactors. It forms dimeric complexes. It depends on Binds multiple chlorophylls. PSII binds additional chlorophylls, carotenoids and specific lipids. as a cofactor.

It is found in the plastid. It localises to the chloroplast thylakoid membrane. In terms of biological role, one of the components of the core complex of photosystem II (PSII). It binds chlorophyll and helps catalyze the primary light-induced photochemical processes of PSII. PSII is a light-driven water:plastoquinone oxidoreductase, using light energy to abstract electrons from H(2)O, generating O(2) and a proton gradient subsequently used for ATP formation. The protein is Photosystem II CP47 reaction center protein of Draba nemorosa (Woodland whitlowgrass).